A 334-amino-acid polypeptide reads, in one-letter code: F420-dependent glucose-6-phosphate dehydrogenase (334 aa).

Aspartate 38 is a coenzyme F420-(gamma-Glu)n binding site. Histidine 39 acts as the Proton donor in catalysis. Residues threonine 75 and threonine 106–glycine 107 contribute to the coenzyme F420-(gamma-Glu)n site. Glutamate 108 serves as the catalytic Proton acceptor. Coenzyme F420-(gamma-Glu)n contacts are provided by residues asparagine 111, glycine 175–glycine 176, and leucine 178–valine 179. Substrate contacts are provided by threonine 193, lysine 196, lysine 257, and arginine 281.

It belongs to the F420-dependent glucose-6-phosphate dehydrogenase family. In terms of assembly, homodimer.

It carries out the reaction oxidized coenzyme F420-(gamma-L-Glu)(n) + D-glucose 6-phosphate + H(+) = 6-phospho-D-glucono-1,5-lactone + reduced coenzyme F420-(gamma-L-Glu)(n). Functionally, catalyzes the coenzyme F420-dependent oxidation of glucose 6-phosphate (G6P) to 6-phosphogluconolactone. In Kribbella flavida (strain DSM 17836 / JCM 10339 / NBRC 14399), this protein is F420-dependent glucose-6-phosphate dehydrogenase.